The chain runs to 60 residues: Cytotoxin 3 (60 aa).

4 disulfide bridges follow: Cys3-Cys21, Cys14-Cys38, Cys42-Cys53, and Cys54-Cys59.

Belongs to the three-finger toxin family. Short-chain subfamily. Type IA cytotoxin sub-subfamily. As to quaternary structure, monomer in solution; Homodimer and oligomer in the presence of negatively charged lipids forming a pore with a size ranging between 20 and 30 Angstroms. As to expression, expressed by the venom gland.

It is found in the secreted. The protein resides in the target cell membrane. Functionally, shows cytolytic activity on many different cells by forming pore in lipid membranes. In vivo, increases heart rate or kills the animal by cardiac arrest. In addition, it binds to heparin with high affinity, interacts with Kv channel-interacting protein 1 (KCNIP1) in a calcium-independent manner, and binds to integrin alpha-V/beta-3 (ITGAV/ITGB3) with moderate affinity. The polypeptide is Cytotoxin 3 (Naja naja (Indian cobra)).